We begin with the raw amino-acid sequence, 160 residues long: Sulfur-rich protein (160 aa).

The next 2 helical transmembrane spans lie at 63-83 (ITMV…TFVL) and 92-112 (FLFL…SVCM).

The protein localises to the membrane. The sequence is that of Sulfur-rich protein (srp) from Chlamydophila psittaci (strain ATCC VR-125 / 6BC) (Chlamydia psittaci).